The primary structure comprises 233 residues: ATP-dependent dethiobiotin synthetase BioD (233 aa).

Residue 12 to 17 (GVGKTI) participates in ATP binding. T16 serves as a coordination point for Mg(2+). Residue K37 is part of the active site. S41 is a binding site for substrate. Residues D51, 112–115 (EGAG), and 202–204 (PKL) each bind ATP. Mg(2+) contacts are provided by D51 and E112.

Belongs to the dethiobiotin synthetase family. As to quaternary structure, homodimer. Mg(2+) is required as a cofactor.

It localises to the cytoplasm. The catalysed reaction is (7R,8S)-7,8-diammoniononanoate + CO2 + ATP = (4R,5S)-dethiobiotin + ADP + phosphate + 3 H(+). It participates in cofactor biosynthesis; biotin biosynthesis; biotin from 7,8-diaminononanoate: step 1/2. In terms of biological role, catalyzes a mechanistically unusual reaction, the ATP-dependent insertion of CO2 between the N7 and N8 nitrogen atoms of 7,8-diaminopelargonic acid (DAPA, also called 7,8-diammoniononanoate) to form a ureido ring. This chain is ATP-dependent dethiobiotin synthetase BioD, found in Bacillus velezensis (strain DSM 23117 / BGSC 10A6 / LMG 26770 / FZB42) (Bacillus amyloliquefaciens subsp. plantarum).